The following is a 903-amino-acid chain: MISSLLKKVFGSRNDRLLKQYRQTVARINALEPAMQALSDEALAAKTQEFRDRLGKGEKLDDLLPEAFAVCREASRRVLGMRHFDVQLIGGMSLHQGKIAEMRTGEGKTLVGTLPVYLNALSGDGVHVVTVNDYLASRDAGIMAPLYNFLGLSVGVNLSQMAHDDKQAAYACDITYGTNNEFGFDYLRDNMVFSVDEKVQRKLAFAVVDEVDSILIDEARTPLIISGPADDNIDMYQRMNAVPPLLKRQETEEGEGDYWVDEKAHSVLLSEAGHEHSEEILTRLGLLKEGDSLYSATNITLMHHLMAALRAYSLFHKDQHYVVQDGEVVIVDEFTGRLMAGRRWSDGLHQAVEAKEGVEINRENQTLASITFQNYFRLYGKLSGMTGTADTEAYEFQSIYNLETVVIPTNKPMIRKDSQDKVYRSAKEKYDAILADIKDCHERGQPVLVGTTSIENSELVANLLSQAKLPHNVLNAKEHAREADIVVQAGRPGMITVATNMAGRGTDIVLGGNPEPEIKAVRADDSLSDADKNARIEAIRAEWKQRHAAVLEAGGLHIVGTERHESRRIDNQLRGRSGRQGDPGSSRFYLCLEDPLLRIFASDRVAAIMDRLKMPEGEAIEHPWVTRSIENAQRKVEGRNFDIRKQLLEYDDVANDQRKVIYQQRNEILVEEDVSDVVINMREGVISDLVDLHLPPESLEEQWDLAGLEKTLASDFLLEVPVAEWIKAEPNLDIEQIRQRIVDMAAAAYQAKVDQAGDGVMRQFERSLVLQMLDNHWREHLAAMDHLRQGIHLRGYAQKNPKQEYKREAFELFADMLERIKRSVVQVLMTVQIRGQEDVDAVEPHALPDFEMQHAEPGSALGDDEDNPLSPEALASQGLRINRNDACPCGSGKKYKQCHGRLA.

Residues Gln-87, 105–109, and Asp-507 each bind ATP; that span reads GEGKT. 2 disordered regions span residues 565–584 and 855–877; these read ESRR…GDPG and AEPG…LASQ. Residues Cys-887, Cys-889, Cys-898, and His-899 each coordinate Zn(2+).

It belongs to the SecA family. As to quaternary structure, monomer and homodimer. Part of the essential Sec protein translocation apparatus which comprises SecA, SecYEG and auxiliary proteins SecDF-YajC and YidC. It depends on Zn(2+) as a cofactor.

Its subcellular location is the cell inner membrane. The protein resides in the cytoplasm. The catalysed reaction is ATP + H2O + cellular proteinSide 1 = ADP + phosphate + cellular proteinSide 2.. Functionally, part of the Sec protein translocase complex. Interacts with the SecYEG preprotein conducting channel. Has a central role in coupling the hydrolysis of ATP to the transfer of proteins into and across the cell membrane, serving both as a receptor for the preprotein-SecB complex and as an ATP-driven molecular motor driving the stepwise translocation of polypeptide chains across the membrane. This Chromobacterium violaceum (strain ATCC 12472 / DSM 30191 / JCM 1249 / CCUG 213 / NBRC 12614 / NCIMB 9131 / NCTC 9757 / MK) protein is Protein translocase subunit SecA.